The primary structure comprises 244 residues: MMRTPGLLGLRGFVAFAAKLWSFVLYLLRRQVRTIIQYQTVRYDVLPLSPASRNRLSQVKRKVLVLDLDETLIHSHHDGVLRPTVRPGTPPDFILKVVIDKHPVRFFVHKRPHVDFFLEVVSQWYELVVFTASMEIYGSAVADKLDNNRGVLRRRFYRQHCTLELGSYIKDLSVVHSDLSSVVILDNSPGAYRSHPDNAIPIKSWFSDPSDTALLNLLPMLDALRFTADVRSVLSRNLHQHRLW.

The helical transmembrane segment at 7-29 (LLGLRGFVAFAAKLWSFVLYLLR) threads the bilayer. Positions 57-224 (SQVKRKVLVL…LNLLPMLDAL (168 aa)) constitute an FCP1 homology domain.

It belongs to the dullard family. As to quaternary structure, interacts with bmpr1a, bmpr1b and bmpr2.

The protein localises to the membrane. Its subcellular location is the cytoplasm. It localises to the perinuclear region. The catalysed reaction is O-phospho-L-seryl-[protein] + H2O = L-seryl-[protein] + phosphate. The enzyme catalyses O-phospho-L-threonyl-[protein] + H2O = L-threonyl-[protein] + phosphate. Functionally, serine/threonine protein phosphatase that may dephosphorylate and activate lipins. Lipins are phosphatidate phosphatases that catalyze the conversion of phosphatidic acid to diacylglycerol and control the metabolism of fatty acids at different levels. May indirectly modulate the lipid composition of nuclear and/or endoplasmic reticulum membranes and be required for proper nuclear membrane morphology and/or dynamics. May also indirectly regulate the production of lipid droplets and triacylglycerol. Induces neuronal differentiation by antagonizing BMP signaling. Acts both by dephosphorylating BMPR1A and by promoting BMPR2 proteasomal degradation. This chain is CTD nuclear envelope phosphatase 1 (ctdnep1), found in Xenopus tropicalis (Western clawed frog).